We begin with the raw amino-acid sequence, 57 residues long: Large ribosomal subunit protein bL32 (57 aa).

It belongs to the bacterial ribosomal protein bL32 family.

This is Large ribosomal subunit protein bL32 from Halothermothrix orenii (strain H 168 / OCM 544 / DSM 9562).